Reading from the N-terminus, the 457-residue chain is Siroheme synthase (457 aa).

Residues 1–204 are precorrin-2 dehydrogenase /sirohydrochlorin ferrochelatase; the sequence is MDHLPIFCQL…NDQKAITETT (204 aa). NAD(+) is bound by residues 22–23 and 43–44; these read DV and LA. Serine 128 is subject to Phosphoserine. Residues 216-457 form a uroporphyrinogen-III C-methyltransferase region; the sequence is GEVVLVGAGP…RDKLNWFSNH (242 aa). Residue proline 225 coordinates S-adenosyl-L-methionine. Residue aspartate 248 is the Proton acceptor of the active site. Lysine 270 functions as the Proton donor in the catalytic mechanism. S-adenosyl-L-methionine contacts are provided by residues 301 to 303, isoleucine 306, 331 to 332, methionine 382, and glycine 411; these read GGD and TA.

It in the N-terminal section; belongs to the precorrin-2 dehydrogenase / sirohydrochlorin ferrochelatase family. In the C-terminal section; belongs to the precorrin methyltransferase family.

It carries out the reaction uroporphyrinogen III + 2 S-adenosyl-L-methionine = precorrin-2 + 2 S-adenosyl-L-homocysteine + H(+). The enzyme catalyses precorrin-2 + NAD(+) = sirohydrochlorin + NADH + 2 H(+). It catalyses the reaction siroheme + 2 H(+) = sirohydrochlorin + Fe(2+). The protein operates within cofactor biosynthesis; adenosylcobalamin biosynthesis; precorrin-2 from uroporphyrinogen III: step 1/1. It participates in cofactor biosynthesis; adenosylcobalamin biosynthesis; sirohydrochlorin from precorrin-2: step 1/1. Its pathway is porphyrin-containing compound metabolism; siroheme biosynthesis; precorrin-2 from uroporphyrinogen III: step 1/1. It functions in the pathway porphyrin-containing compound metabolism; siroheme biosynthesis; siroheme from sirohydrochlorin: step 1/1. The protein operates within porphyrin-containing compound metabolism; siroheme biosynthesis; sirohydrochlorin from precorrin-2: step 1/1. Functionally, multifunctional enzyme that catalyzes the SAM-dependent methylations of uroporphyrinogen III at position C-2 and C-7 to form precorrin-2 via precorrin-1. Then it catalyzes the NAD-dependent ring dehydrogenation of precorrin-2 to yield sirohydrochlorin. Finally, it catalyzes the ferrochelation of sirohydrochlorin to yield siroheme. The chain is Siroheme synthase from Escherichia coli O6:K15:H31 (strain 536 / UPEC).